The chain runs to 339 residues: UDP-glucose 4-epimerase (339 aa).

Residues 12–13 (FI), 32–37 (DNLCNS), 59–60 (DI), 81–85 (FAGLK), N100, S125, Y150, K154, and F179 each bind NAD(+). The substrate site is built by S125 and Y150. Y150 functions as the Proton acceptor in the catalytic mechanism. Substrate contacts are provided by residues N180, 200–201 (NL), 217–219 (SVF), R232, and 293–296 (RAGD).

This sequence belongs to the NAD(P)-dependent epimerase/dehydratase family. Homodimer. The cofactor is NAD(+).

The catalysed reaction is UDP-alpha-D-glucose = UDP-alpha-D-galactose. It participates in carbohydrate metabolism; galactose metabolism. Functionally, involved in the metabolism of galactose. Plays an essential role in the incorporation of galactose into meningococcal lipopolysaccharide surface molecules, which are important for pathogenesis. Catalyzes the conversion of UDP-galactose (UDP-Gal) to UDP-glucose (UDP-Glc) through a mechanism involving the transient reduction of NAD. This chain is UDP-glucose 4-epimerase (galE), found in Neisseria meningitidis serogroup A / serotype 4A (strain DSM 15465 / Z2491).